A 588-amino-acid polypeptide reads, in one-letter code: NADP-dependent malic enzyme 2 (588 aa).

The tract at residues 1–21 (MGSTPTDLPGEDVADNRSGVG) is disordered. Residue G2 is modified to N-acetylglycine. Catalysis depends on Y136, which acts as the Proton donor. R189 contacts NADP(+). Residue K207 is the Proton acceptor of the active site. A divalent metal cation contacts are provided by E279, D280, and D303. Residues D303, 332–348 (LFLG…ELIA), and N444 each bind NADP(+).

Belongs to the malic enzymes family. In terms of assembly, homohexamers and homooctamers. Mg(2+) is required as a cofactor. It depends on Mn(2+) as a cofactor. Expressed in leaves, stems, flowers and roots. Particularly present in vasculatures, trichome basal cells and hydatodes.

The protein resides in the cytoplasm. The enzyme catalyses (S)-malate + NADP(+) = pyruvate + CO2 + NADPH. It catalyses the reaction oxaloacetate + H(+) = pyruvate + CO2. Activated by coenzyme A (CoA), aspartate, succinate and fumarate. Repressed by oxaloacetate, glucose and ATP. This chain is NADP-dependent malic enzyme 2 (NADP-ME2), found in Arabidopsis thaliana (Mouse-ear cress).